The sequence spans 205 residues: Octanoyltransferase (205 aa).

The BPL/LPL catalytic domain maps to 29-204 (AETPDEIWIV…HLLQQLDQKN (176 aa)). Substrate contacts are provided by residues 68–75 (RGGQVTYH), 135–137 (ALG), and 148–150 (GVS). Cys-166 (acyl-thioester intermediate) is an active-site residue.

The protein belongs to the LipB family.

It is found in the cytoplasm. It catalyses the reaction octanoyl-[ACP] + L-lysyl-[protein] = N(6)-octanoyl-L-lysyl-[protein] + holo-[ACP] + H(+). It participates in protein modification; protein lipoylation via endogenous pathway; protein N(6)-(lipoyl)lysine from octanoyl-[acyl-carrier-protein]: step 1/2. Its function is as follows. Catalyzes the transfer of endogenously produced octanoic acid from octanoyl-acyl-carrier-protein onto the lipoyl domains of lipoate-dependent enzymes. Lipoyl-ACP can also act as a substrate although octanoyl-ACP is likely to be the physiological substrate. In Dechloromonas aromatica (strain RCB), this protein is Octanoyltransferase.